Consider the following 1334-residue polypeptide: Putative transmembrane protein ORF1334 (1334 aa).

A helical transmembrane segment spans residues 53–73 (VSIVVLVLTLFIIPVIIPPAH). Residues 1107–1135 (LSASTTPPSSTTPTPPSSSSSSSSSSSIS) are disordered. Residues 1110–1135 (STTPPSSTTPTPPSSSSSSSSSSSIS) are compositionally biased toward low complexity. 3 helical membrane-spanning segments follow: residues 1256 to 1276 (AVLP…SFFI), 1292 to 1312 (IIYI…TSVV), and 1313 to 1333 (YGTV…SRSQ).

The protein localises to the host membrane. In Acidianus two-tailed virus (ATV), this protein is Putative transmembrane protein ORF1334.